The chain runs to 295 residues: Ethanolamine ammonia-lyase small subunit (295 aa).

Residues Val207, Glu228, and Cys258 each coordinate adenosylcob(III)alamin.

It belongs to the EutC family. In terms of assembly, the basic unit is a heterodimer which dimerizes to form tetramers. The heterotetramers trimerize; 6 large subunits form a core ring with 6 small subunits projecting outwards. The cofactor is adenosylcob(III)alamin.

The protein resides in the bacterial microcompartment. It carries out the reaction ethanolamine = acetaldehyde + NH4(+). The protein operates within amine and polyamine degradation; ethanolamine degradation. In terms of biological role, catalyzes the deamination of various vicinal amino-alcohols to oxo compounds. Allows this organism to utilize ethanolamine as the sole source of nitrogen and carbon in the presence of external vitamin B12. This is Ethanolamine ammonia-lyase small subunit from Escherichia fergusonii (strain ATCC 35469 / DSM 13698 / CCUG 18766 / IAM 14443 / JCM 21226 / LMG 7866 / NBRC 102419 / NCTC 12128 / CDC 0568-73).